A 313-amino-acid polypeptide reads, in one-letter code: Acetyl-coenzyme A carboxylase carboxyl transferase subunit alpha (313 aa).

The CoA carboxyltransferase C-terminal domain occupies Asp30–Phe291.

The protein belongs to the AccA family. Acetyl-CoA carboxylase is a heterohexamer composed of biotin carboxyl carrier protein (AccB), biotin carboxylase (AccC) and two subunits each of ACCase subunit alpha (AccA) and ACCase subunit beta (AccD).

Its subcellular location is the cytoplasm. The enzyme catalyses N(6)-carboxybiotinyl-L-lysyl-[protein] + acetyl-CoA = N(6)-biotinyl-L-lysyl-[protein] + malonyl-CoA. It participates in lipid metabolism; malonyl-CoA biosynthesis; malonyl-CoA from acetyl-CoA: step 1/1. In terms of biological role, component of the acetyl coenzyme A carboxylase (ACC) complex. First, biotin carboxylase catalyzes the carboxylation of biotin on its carrier protein (BCCP) and then the CO(2) group is transferred by the carboxyltransferase to acetyl-CoA to form malonyl-CoA. The chain is Acetyl-coenzyme A carboxylase carboxyl transferase subunit alpha from Zymomonas mobilis subsp. mobilis (strain ATCC 31821 / ZM4 / CP4).